The sequence spans 225 residues: Uracil-DNA glycosylase 1 (225 aa).

The Proton acceptor role is filled by Asp68.

Belongs to the uracil-DNA glycosylase (UDG) superfamily. UNG family.

The protein localises to the cytoplasm. It carries out the reaction Hydrolyzes single-stranded DNA or mismatched double-stranded DNA and polynucleotides, releasing free uracil.. Functionally, excises uracil residues from the DNA which can arise as a result of misincorporation of dUMP residues by DNA polymerase or due to deamination of cytosine. This chain is Uracil-DNA glycosylase 1 (ung1), found in Streptomyces avermitilis (strain ATCC 31267 / DSM 46492 / JCM 5070 / NBRC 14893 / NCIMB 12804 / NRRL 8165 / MA-4680).